The following is a 72-amino-acid chain: Translation initiation factor IF-1 (72 aa).

An S1-like domain is found at 1–72 (MAKEDVIEIE…TRGRITYRFK (72 aa)).

The protein belongs to the IF-1 family. Component of the 30S ribosomal translation pre-initiation complex which assembles on the 30S ribosome in the order IF-2 and IF-3, IF-1 and N-formylmethionyl-tRNA(fMet); mRNA recruitment can occur at any time during PIC assembly.

The protein resides in the cytoplasm. Its function is as follows. One of the essential components for the initiation of protein synthesis. Stabilizes the binding of IF-2 and IF-3 on the 30S subunit to which N-formylmethionyl-tRNA(fMet) subsequently binds. Helps modulate mRNA selection, yielding the 30S pre-initiation complex (PIC). Upon addition of the 50S ribosomal subunit IF-1, IF-2 and IF-3 are released leaving the mature 70S translation initiation complex. This Streptococcus agalactiae serotype Ia (strain ATCC 27591 / A909 / CDC SS700) protein is Translation initiation factor IF-1.